A 356-amino-acid polypeptide reads, in one-letter code: Peptide chain release factor 1 (356 aa).

Position 232 is an N5-methylglutamine (glutamine 232).

The protein belongs to the prokaryotic/mitochondrial release factor family. Methylated by PrmC. Methylation increases the termination efficiency of RF1.

It is found in the cytoplasm. In terms of biological role, peptide chain release factor 1 directs the termination of translation in response to the peptide chain termination codons UAG and UAA. The chain is Peptide chain release factor 1 from Thermoanaerobacter pseudethanolicus (strain ATCC 33223 / 39E) (Clostridium thermohydrosulfuricum).